The chain runs to 466 residues: Argininosuccinate lyase (466 aa).

This sequence belongs to the lyase 1 family. Argininosuccinate lyase subfamily.

The protein resides in the cytoplasm. It catalyses the reaction 2-(N(omega)-L-arginino)succinate = fumarate + L-arginine. Its pathway is amino-acid biosynthesis; L-arginine biosynthesis; L-arginine from L-ornithine and carbamoyl phosphate: step 3/3. This Campylobacter concisus (strain 13826) protein is Argininosuccinate lyase.